The following is a 324-amino-acid chain: IDS-like terpene synthase 1 (324 aa).

Residues aspartate 77 and aspartate 81 each contribute to the Mg(2+) site.

The protein belongs to the FPP/GGPP synthase family. The cofactor is Mg(2+).

The enzyme catalyses (2E)-geranyl diphosphate = (E)-beta-ocimene + diphosphate. It catalyses the reaction (2E)-geranyl diphosphate + H2O = linalool + diphosphate. It carries out the reaction (2E,6E)-farnesyl diphosphate = (3E,6E)-alpha-farnesene + diphosphate. The catalysed reaction is (2E,6E,10E)-geranylgeranyl diphosphate = (E,E,E)-alpha-springene + diphosphate. Functionally, terpene synthase that shows monoterpene synthase activity and produces (E)-beta-ocimene as a major product and linalool as a minor product, using geranyl diphosphate (GPP) as substrate. Also shows sesquiterpene synthase activity as it is able to convert farnesyl diphosphate (FPP) into (E,E)-alpha-farnesene. Finally, TPS1 can convert geranylgeranyl diphosphate into (E,E,E)-alpha-springene. This chain is IDS-like terpene synthase 1, found in Melampsora larici-populina (strain 98AG31 / pathotype 3-4-7) (Poplar leaf rust fungus).